The chain runs to 576 residues: SNF1-like protein kinase ssp2 (576 aa).

The Protein kinase domain maps to 34–285 (YIIRETLGEG…IQEIRRDPWF (252 aa)). ATP-binding positions include 40 to 48 (LGEGSFGKV) and K63. Residue D156 is the Proton acceptor of the active site. T189 is modified (phosphothreonine). An auto-inhibitory domain (AID) region spans residues 292 to 348 (YLRPMEEVQGSYADSRIVSKLGEAMGFSEDYIVEALRSDENNEVKEAYNLLHENQVI). The 42-residue stretch at 304–345 (ADSRIVSKLGEAMGFSEDYIVEALRSDENNEVKEAYNLLHEN) folds into the UBA domain. S442 is modified (phosphoserine).

This sequence belongs to the protein kinase superfamily. CAMK Ser/Thr protein kinase family. SNF1 subfamily. As to quaternary structure, component of the AMP-activated protein kinase complex also known as the SNF1 kinase complex (Snf1c), a heterotrimeric complex composed of a catalytic subunit alpha and 2 regulatory subunits beta (amk2) and gamma (cbs2). In terms of processing, phosphorylation at Thr-189 by ssp1 is required for nuclear entry in nutritionally stressed cells.

The protein resides in the cytoplasm. Its subcellular location is the nucleus. It carries out the reaction L-seryl-[protein] + ATP = O-phospho-L-seryl-[protein] + ADP + H(+). The catalysed reaction is L-threonyl-[protein] + ATP = O-phospho-L-threonyl-[protein] + ADP + H(+). Serine/threonine protein kinase essential for release from glucose repression via the phosphorylation of scr1 upon glucose deprivation. Catalytic subunit of the AMP-activated protein kinase complex also known as the SNF1 kinase complex (Snf1c), a central regulator of cellular energy homeostasis, which, in response to a fall in intracellular ATP levels, activates energy-producing pathways and inhibits energy-consuming processes. The complex phosphorylates histone H3 to form H3S10ph, which promotes H3K14ac formation, leading to transcriptional activation through TBP recruitment to the promoters. Regulates proper cell cycle exit and sexual differentiation. Also regulates ste11 levels under nitrogen deprivation. This Schizosaccharomyces pombe (strain 972 / ATCC 24843) (Fission yeast) protein is SNF1-like protein kinase ssp2.